Consider the following 439-residue polypeptide: Secreted RxLR effector protein 117 (439 aa).

Positions 1 to 21 (MRGAYYVLAALLVVASSQIAA) are cleaved as a signal peptide. A RxLR-dEER motif is present at residues 48-65 (RYLRGGHDVHDDSANEER).

Belongs to the RxLR effector family.

It localises to the secreted. It is found in the host nucleus. Its function is as follows. Secreted effector that acts as an elicitor that induces cell death in host plant cells. The chain is Secreted RxLR effector protein 117 from Plasmopara viticola (Downy mildew of grapevine).